Reading from the N-terminus, the 470-residue chain is Glutamate--tRNA ligase (470 aa).

Residues 9-19 (PSPTGFLHVGG) carry the 'HIGH' region motif. The short motif at 236–240 (KLSKR) is the 'KMSKS' region element. Lys239 serves as a coordination point for ATP.

This sequence belongs to the class-I aminoacyl-tRNA synthetase family. Glutamate--tRNA ligase type 1 subfamily. In terms of assembly, monomer.

It is found in the cytoplasm. The catalysed reaction is tRNA(Glu) + L-glutamate + ATP = L-glutamyl-tRNA(Glu) + AMP + diphosphate. In terms of biological role, catalyzes the attachment of glutamate to tRNA(Glu) in a two-step reaction: glutamate is first activated by ATP to form Glu-AMP and then transferred to the acceptor end of tRNA(Glu). This is Glutamate--tRNA ligase from Psychromonas ingrahamii (strain DSM 17664 / CCUG 51855 / 37).